The sequence spans 811 residues: Hypoxia-inducible factor 1-alpha (811 aa).

The interval methionine 1 to arginine 27 is disordered. Positions threonine 8 to arginine 27 are enriched in basic and acidic residues. In terms of domain architecture, bHLH spans arginine 17–arginine 70. 2 consecutive PAS domains span residues threonine 80 to lysine 157 and proline 228 to glycine 298. One can recognise a PAC domain in the interval threonine 302 to isoleucine 345. Positions alanine 401–glycine 587 are ODD. Proline 402 carries the post-translational modification 4-hydroxyproline. Positions proline 490 to cysteine 518 are disordered. Positions proline 496–proline 514 are enriched in low complexity. The segment at phenylalanine 529–arginine 573 is NTAD. Residue proline 562 is modified to 4-hydroxyproline. The segment at aspartate 576–cysteine 785 is ID. Polar residues predominate over residues asparagine 634 to alanine 652. Positions asparagine 634–isoleucine 655 are disordered. Short sequence motifs (nuclear localization signal) lie at residues arginine 703–lysine 706 and glycine 718–serine 721. Positions serine 771–asparagine 811 are CTAD. Asparagine 788 is modified ((3S)-3-hydroxyasparagine).

As to quaternary structure, efficient DNA binding requires heterodimerization of an alpha and a beta/ARNT subunit. Post-translationally, in normoxia, is hydroxylated on Pro-402 and Pro-562. The hydroxylated prolines promote interaction with VHL, initiating rapid ubiquitination and subsequent proteasomal degradation. Under hypoxia, proline hydroxylation is impaired and ubiquitination is attenuated, resulting in stabilization. In terms of processing, in normoxia, is hydroxylated on Asn-788, thus abrogating interaction with CREBBP and EP300 and preventing transcriptional activation. The iron and 2-oxoglutarate dependent 3-hydroxylation of asparagine is (S) stereospecific within HIF CTAD domains.

Its subcellular location is the cytoplasm. The protein localises to the nucleus. The protein resides in the nucleus speckle. Its activity is regulated as follows. Induced by reactive oxygen species (ROS). In terms of biological role, functions as a master transcriptional regulator of the adaptive response to hypoxia. Under hypoxic conditions, activates the transcription of over 40 genes, including erythropoietin, glucose transporters, glycolytic enzymes, vascular endothelial growth factor, HILPDA, and other genes whose protein products increase oxygen delivery or facilitate metabolic adaptation to hypoxia. Plays an essential role in embryonic vascularization, tumor angiogenesis and pathophysiology of ischemic disease. This is Hypoxia-inducible factor 1-alpha (HIF1A) from Gallus gallus (Chicken).